Reading from the N-terminus, the 263-residue chain is Stress-response A/B barrel domain-containing protein UP3 (263 aa).

Stress-response A/B barrel domains follow at residues 49–142 (IEHI…AVDW) and 158–252 (VAKL…VVEF). A Peroxisomal targeting signal motif is present at residues 261 to 263 (SSL).

Homodimer.

It localises to the peroxisome. Functionally, involved in stress response. The protein is Stress-response A/B barrel domain-containing protein UP3 of Arabidopsis thaliana (Mouse-ear cress).